We begin with the raw amino-acid sequence, 20 residues long: Venom peptide Ocy8 (20 aa).

In terms of tissue distribution, expressed by the venom gland.

The protein localises to the secreted. This is Venom peptide Ocy8 from Opisthacanthus cayaporum (South American scorpion).